A 693-amino-acid polypeptide reads, in one-letter code: Endoprotease bli (693 aa).

Positions 1-20 are cleaved as a signal peptide; it reads MYWQLVRILVLFDCLQKILA. The propeptide at 21–116 is inhibition peptide; that stretch reads IEHDSICIAD…EQRPRVRRKR (96 aa). D161 is a binding site for Ca(2+). One can recognise a Peptidase S8 domain in the interval 167–482; sequence QWYLNNGAQG…YGLMDAGALV (316 aa). N194 is a glycosylation site (N-linked (GlcNAc...) asparagine). Catalysis depends on D201, which acts as the Charge relay system. D202 provides a ligand contact to substrate. The Ca(2+) site is built by D210, D222, D227, and D229. Positions 215–242 are disordered; the sequence is YDPLASTDINGHDDDPTPQDDGDNKHGT. 237–238 provides a ligand contact to substrate; sequence DN. The Charge relay system role is filled by H240. I251, N254, Y256, and G258 together coordinate Ca(2+). 2 disulfide bridges follow: C257/C406 and C349/C379. Residues E282, 299–304, D310, and 338–341 contribute to the substrate site; these read SWGPED and ASGN. D304 is a binding site for Ca(2+). D347 provides a ligand contact to Ca(2+). Residues D352 and Y354 each coordinate substrate. Position 377 (E377) interacts with Ca(2+). Catalysis depends on S414, which acts as the Charge relay system. S414 provides a ligand contact to substrate. N-linked (GlcNAc...) asparagine glycosylation is found at N433 and N518. Residues 490–628 form the P/Homo B domain; the sequence is TVPEQHICTY…SLLLYGTAEP (139 aa). C497 and C526 are oxidised to a cystine. The tract at residues 629–693 is disordered; that stretch reads AQPNDPRHSS…LVSAQPELRV (65 aa). Positions 668 to 681 are enriched in basic and acidic residues; it reads DSRDWQPKKVENKK.

It belongs to the peptidase S8 family. Furin subfamily. Ca(2+) is required as a cofactor. N-glycosylated. Post-translationally, the inhibition peptide, which plays the role of an intramolecular chaperone, is probably autocatalytically removed in the endoplasmic reticulum (ER) and remains non-covalently bound as a potent autoinhibitor. Probably following transport to the trans Golgi, a second cleavage within the inhibition propeptide results in propeptide dissociation and bli activation.

The protein localises to the secreted. The catalysed reaction is Release of mature proteins from their proproteins by cleavage of -Arg-Xaa-Yaa-Arg-|-Zaa- bonds, where Xaa can be any amino acid and Yaa is Arg or Lys. Releases albumin, complement component C3 and von Willebrand factor from their respective precursors.. With respect to regulation, inhibited by the propeptide before the second cleavage. Inhibited by ethylenediaminetetraacetic acid (EDTA), ZnSO(4) and chloroketone DEC-RVKR-CMK. Its function is as follows. Serine endoprotease which cleaves substrates at the RX(K/R)R consensus motif. This chain is Endoprotease bli, found in Onchocerca volvulus.